A 351-amino-acid chain; its full sequence is Tropomodulin-2 (351 aa).

Position 25 is a phosphoserine (serine 25).

The protein belongs to the tropomodulin family. In terms of assembly, binds to the N-terminus of tropomyosin and to actin. Binds to TMBr3 as well as to other low molecular mass tropomyosins (TM5a or TM5), but not to high molecular mass tropomyosins (TM2 or TMBr1). As to expression, neuronal-tissue specific.

It is found in the cytoplasm. The protein localises to the cytoskeleton. Blocks the elongation and depolymerization of the actin filaments at the pointed end. The Tmod/TM complex contributes to the formation of the short actin protofilament, which in turn defines the geometry of the membrane skeleton. This chain is Tropomodulin-2 (Tmod2), found in Rattus norvegicus (Rat).